Here is a 495-residue protein sequence, read N- to C-terminus: Regulator of G-protein signaling 7 (495 aa).

The 76-residue stretch at 37–112 folds into the DEP domain; that stretch reads EKNGIPIRTV…DDGTFYRFQT (76 aa). 2 positions are modified to phosphoserine: S229 and S241. The tract at residues 235–256 is disordered; sequence NDIRSHSPTHTPTPETKPPTED. T243 carries the post-translational modification Phosphothreonine. The 62-residue stretch at 255-316 folds into the G protein gamma domain; the sequence is EDELQQQIKY…LSDDTTFWEL (62 aa). Residues 333–448 form the RGS domain; it reads GMDEALKDPV…IRSSAYQELL (116 aa). S434 bears the Phosphoserine mark.

In terms of assembly, interacts with GNB5, forming the RGS7-GNB5 complex. Interacts with GPR158; promotes the GTPase activator activity of the RGS7-GNB5 complex in absence of glycine, in contrast GTPase activator activity of the RGS7-GNB5 complex is inhibited in presence of glycine. Interacts with GPR179. Interacts with PKD1; this prevents rapid proteasomal degradation. Interacts with RGS7BP, leading to regulate the subcellular location of the heterodimer formed with GNB5. Interacts (phosphorylated form) with 14-3-3 protein YWHAQ. Interacts with SNAPIN. Interacts with GNAI1. Interacts with GNAO1, GNAI3 and GNAZ. Palmitoylated. In terms of processing, ubiquitinated, leading to rapid proteasomal degradation. Post-translationally, phosphorylation and subsequent interaction with 14-3-3 proteins inhibits GAP activity.

It localises to the cytoplasm. The protein resides in the cytosol. Its subcellular location is the cell membrane. It is found in the membrane. GTPase activator component of the RGS7-GNB5 complex that regulates G protein-coupled receptor signaling cascades. The RGS7-GNB5 complex acts as an inhibitor signal transduction by promoting the GTPase activity of G protein alpha subunits, such as GNAO1, thereby driving them into their inactive GDP-bound form. May play a role in synaptic vesicle exocytosis. Glycine-dependent regulation of the RGS7-GNB5 complex by GPR158 affects mood and cognition via its ability to regulate neuronal excitability in L2/L3 pyramidal neurons of the prefrontal cortex. Modulates the activity of potassium channels that are activated by GNAO1 in response to muscarinic acetylcholine receptor M2/CHRM2 signaling. The chain is Regulator of G-protein signaling 7 (RGS7) from Homo sapiens (Human).